The primary structure comprises 495 residues: Geraniol 8-hydroxylase (495 aa).

A helical membrane pass occupies residues 5-25 (FLTIAIGFLFTITLYQALNFF). C438 lines the heme pocket.

The protein belongs to the cytochrome P450 family. Heme serves as cofactor. Expressed in leaves, stems and roots.

Its subcellular location is the endoplasmic reticulum membrane. It catalyses the reaction (2E)-geraniol + reduced [NADPH--hemoprotein reductase] + O2 = (6E)-8-hydroxygeraniol + oxidized [NADPH--hemoprotein reductase] + H2O + H(+). In terms of biological role, hydroxylase involved in the biosynthesis of hydroxygeraniol, a precursor of the iridoid monoterpenoid swertiamarin. This is Geraniol 8-hydroxylase (CYP76B10) from Swertia mussotii (Felwort).